The following is a 122-amino-acid chain: Small ribosomal subunit protein bS16 (122 aa).

Positions 81 to 122 (GLMKRDAKNNPKKGEPGEKAKERAKERAEKAAAGSTEDAAAE) are disordered. Residues 83-110 (MKRDAKNNPKKGEPGEKAKERAKERAEK) are compositionally biased toward basic and acidic residues. Low complexity predominate over residues 111-122 (AAAGSTEDAAAE).

The protein belongs to the bacterial ribosomal protein bS16 family.

This Xanthobacter autotrophicus (strain ATCC BAA-1158 / Py2) protein is Small ribosomal subunit protein bS16.